The following is a 116-amino-acid chain: Large ribosomal subunit protein uL24 (116 aa).

A disordered region spans residues 1–27 (MAGRKSSTPTRHKMHVKTGDTVQVISG).

The protein belongs to the universal ribosomal protein uL24 family. In terms of assembly, part of the 50S ribosomal subunit.

Its function is as follows. One of two assembly initiator proteins, it binds directly to the 5'-end of the 23S rRNA, where it nucleates assembly of the 50S subunit. Functionally, one of the proteins that surrounds the polypeptide exit tunnel on the outside of the subunit. This is Large ribosomal subunit protein uL24 from Picosynechococcus sp. (strain ATCC 27264 / PCC 7002 / PR-6) (Agmenellum quadruplicatum).